The primary structure comprises 620 residues: Glutathione-regulated potassium-efflux system protein KefC (620 aa).

The next 12 helical transmembrane spans lie at 4-24, 26-46, 54-74, 90-110, 114-134, 149-169, 178-198, 218-238, 270-290, 294-314, 327-347, and 359-379; these read HTLLQALIYLGSAALIVPIAV, LGLGSVLGYLIAGCIIGPWGL, SILHFAEIGVVLMLFVIGLEL, GALQMVVCGGLIGLFCMFLGL, VAELIGMTLALSSTAIAMQAM, FAVLLFQDIAAIPLVAMIPLL, LGAFALSALKVAGALALVVLL, VFSAVALFLVFGFGLLLEEVG, GLLLGLFFIGVGMSIDFGTLV, LRILLLLAGFLAIKIVMLWLV, WFAVLLGQGSEFAFVVFGAAQ, and ALTLAVALSMAATPIFLVLLT. The 120-residue stretch at 399 to 518 folds into the RCK N-terminal domain; it reads QPRVIVAGFG…AGVAMPERET (120 aa). Residues 599 to 620 are disordered; the sequence is QGTAEGKHSGEVADEPEVKPSI.

The protein belongs to the monovalent cation:proton antiporter 2 (CPA2) transporter (TC 2.A.37) family. KefC subfamily. In terms of assembly, homodimer. Interacts with the regulatory subunit KefF.

Its subcellular location is the cell inner membrane. Pore-forming subunit of a potassium efflux system that confers protection against electrophiles. Catalyzes K(+)/H(+) antiport. The sequence is that of Glutathione-regulated potassium-efflux system protein KefC from Salmonella agona (strain SL483).